The sequence spans 342 residues: uncharacterized protein (342 aa).

A signal peptide spans 1-18; the sequence is MWKKLMLLLLMAIPLVSA.

This is an uncharacterized protein from Methanocaldococcus jannaschii (strain ATCC 43067 / DSM 2661 / JAL-1 / JCM 10045 / NBRC 100440) (Methanococcus jannaschii).